Here is a 68-residue protein sequence, read N- to C-terminus: UPF0435 protein SAB1812c (68 aa).

The protein belongs to the UPF0435 family.

In Staphylococcus aureus (strain bovine RF122 / ET3-1), this protein is UPF0435 protein SAB1812c.